The sequence spans 366 residues: 5-hydroxytryptamine receptor 1F (366 aa).

The Extracellular portion of the chain corresponds to 1–24 (MDFLNSSDQNLTSEELLNRMPSKI). Residues Asn5 and Asn10 are each glycosylated (N-linked (GlcNAc...) asparagine). A helical transmembrane segment spans residues 25–49 (LVSLTLSGLALMTTTINSLVIAAII). At 50–59 (VTRKLHHPAN) the chain is on the cytoplasmic side. A helical membrane pass occupies residues 60–81 (YLICSLAVTDFLVAVLVMPFSI). Topologically, residues 82-96 (VYIVRESWIMGQVVC) are extracellular. Cys96 and Cys172 are joined by a disulfide. A helical transmembrane segment spans residues 97-119 (DIWLSVDITCCTCSILHLSAIAL). 2 residues coordinate serotonin: Asp103 and Cys107. Positions 120–122 (DRY) match the DRY motif; important for ligand-induced conformation changes motif. Residues 120–139 (DRYRAITDAVEYARKRTPKH) are Cytoplasmic-facing. Residues 140–159 (AGIMITIVWIISVFISMPPL) form a helical membrane-spanning segment. Over 160–178 (FWRHQGTSRDDECIIKHDH) the chain is Extracellular. A helical membrane pass occupies residues 179–202 (IVSTIYSTFGAFYIPLALILILYY). The Cytoplasmic segment spans residues 203-291 (KIYRAAKTLY…KISGTRERKA (89 aa)). A helical transmembrane segment spans residues 292 to 315 (ATTLGLILGAFVICWLPFFVKELV). Topologically, residues 316 to 327 (VNVCDKCKISEE) are extracellular. Residues 328–350 (MSNFLAWLGYLNSLINPLIYTIF) form a helical membrane-spanning segment. The NPxxY motif; important for ligand-induced conformation changes and signaling motif lies at 343-347 (NPLIY). The Cytoplasmic segment spans residues 351 to 366 (NEDFKKAFQKLVRCRC).

It belongs to the G-protein coupled receptor 1 family.

The protein resides in the cell membrane. G-protein coupled receptor for 5-hydroxytryptamine (serotonin). Also functions as a receptor for various alkaloids and psychoactive substances. Receptor for lasmiditan, a drug for the treatment of acute migraine. Ligand binding causes a conformation change that triggers signaling via guanine nucleotide-binding proteins (G proteins) and modulates the activity of downstream effectors, such as adenylate cyclase. HTR1F is coupled to G(i)/G(o) G alpha proteins and mediates inhibitory neurotransmission by inhibiting adenylate cyclase activity. The polypeptide is 5-hydroxytryptamine receptor 1F (Homo sapiens (Human)).